The primary structure comprises 284 residues: RNase adapter protein RapZ (284 aa).

Residue 8-15 participates in ATP binding; the sequence is GRSGSGKS. A GTP-binding site is contributed by 56 to 59; sequence DVRN. Positions 266-284 are RNA-binding; it reads RSRGKNVQSRHRTLEKRKP.

Belongs to the RapZ-like family. RapZ subfamily. Homotrimer.

Functionally, modulates the synthesis of GlmS, by affecting the processing and stability of the regulatory small RNA GlmZ. When glucosamine-6-phosphate (GlcN6P) concentrations are high in the cell, RapZ binds GlmZ and targets it to cleavage by RNase E. Consequently, GlmZ is inactivated and unable to activate GlmS synthesis. Under low GlcN6P concentrations, RapZ is sequestered and inactivated by an other regulatory small RNA, GlmY, preventing GlmZ degradation and leading to synthesis of GlmS. The protein is RNase adapter protein RapZ of Shigella boydii serotype 18 (strain CDC 3083-94 / BS512).